A 1102-amino-acid chain; its full sequence is MRTSLQAVALWGQKAPPHSITAIMITDDQRTIVTGSQEGQLCLWNLSHELKISAKELLFGHSASVTCLARARDFSKQPYIVSAAENGEMCVWNVTNGQCMEKATLPYRHTAICYYHCSFRMTGEGWLLCCGEYQDVLIIDAKTLAVVHSFRSSQFPDWINCMCIVHSMRIQEDSLLVVSVAGELKVWDLSSSINSIQEKQDVYEKESKFLESLNCQTIRFCTYTERLLLVVFSKCWKVYDYCDFSLLLTEVSRNGQFFAGGEVIAAHRILIWTEDGHSYIYQLLNSGLSKSIYPADGRVLKETIYPHLLCSTSVQENKEQSRPFVMGYMNERKEPFYKVLFSGEVSGRITLWHIPDVPVSKFDGSPREIPVTATWTLQDNFDKHDTMSQSIIDYFSGLKDGAGTAVVTSSEYIPSLDKLICGCEDGTIIITQALNAAKARLLEGGSLVKDSPPHKVLKGHHQSVTSLLYPHGLSSKLDQSWMLSGDLDSCVILWDIFTEEILHKFFLEAGPVTSLLMSPEKFKLRGEQIICCVCGDHSVALLHLEGKSCLLHARKHLFPVRMIKWHPVENFLIVGCADDSVYIWEIETGTLERHETGERARIILNCCDDSQLVKSVLPIASETLKHKSIEQRSSSPYQLGPLPCPGLQVESSCKVTDAKFCPRPFNVLPVKTKWSNVGFHILLFDLENLVELLLPTPLSDVDSSSSFYGGEVLRRAKSTVEKKTLTLRKSKTACGPLSAEALAKPITESLAQGDNTIKFSEENDGIKRQKKMKISKKMQPKPSRKVDASLTIDTAKLFLSCLLPWGVDKDLDYLCIKHLNILKLQGPISLGISLNEDNFSLMLPGWDLCNSGMIKDYSGVNLFSRKVLDLSDKYTATLPNQVGIPRGLENNCDSLRESDTIVYLLSRLFLVNKLVNMPLELACRVGSSFRMESIHNKMRGAGNDILNMSSFYSCLRNGKNESHVPEADLSLLKLISCWRDQSVQVTEAIQAVLLAEVQQHMKSLGKIPVNSQPVSMAENGNCEMKQMLPKLEWTEELELQCVRNTLPLQTPVSPVKHDSNSNSANFQDVEDMPDRCALEESESPGEPRHHSWIAKVCPCKVS.

WD repeat units lie at residues 15-54 (APPH…KISA), 60-102 (GHSA…CMEK), 160-197 (NCMC…NSIQ), 318-362 (KEQS…VSKF), 402-441 (AGTA…KARL), 459-504 (GHHQ…ILHK), 507-552 (LEAG…CLLH), and 555-594 (KHLF…LERH). A phosphoserine mark is found at serine 1081 and serine 1083.

Its subcellular location is the cytoplasmic vesicle. Its function is as follows. Plays a major role in formation of tooth enamel. Specifically required during the maturation phase of amelogenesis for normal formation of the enamel matrix and clearance of enamel proteins. May be involved in localization of the calcium transporter SLC24A4 to the ameloblast cell membrane. The polypeptide is WD repeat-containing protein 72 (WDR72) (Homo sapiens (Human)).